Consider the following 104-residue polypeptide: Co-chaperonin GroES 2 (104 aa).

This sequence belongs to the GroES chaperonin family. In terms of assembly, heptamer of 7 subunits arranged in a ring. Interacts with the chaperonin GroEL.

It is found in the cytoplasm. Functionally, together with the chaperonin GroEL, plays an essential role in assisting protein folding. The GroEL-GroES system forms a nano-cage that allows encapsulation of the non-native substrate proteins and provides a physical environment optimized to promote and accelerate protein folding. GroES binds to the apical surface of the GroEL ring, thereby capping the opening of the GroEL channel. The polypeptide is Co-chaperonin GroES 2 (Bradyrhizobium diazoefficiens (strain JCM 10833 / BCRC 13528 / IAM 13628 / NBRC 14792 / USDA 110)).